The primary structure comprises 546 residues: Inosine-5'-monophosphate dehydrogenase (546 aa).

CBS domains lie at 135-197 and 198-254; these read FILD…VTAI and MSTD…PLAS. NAD(+) contacts are provided by residues 292-294 and 342-344; these read DSS and GMG. K(+)-binding residues include G344 and G346. S347 serves as a coordination point for IMP. C349 contacts K(+). C349 serves as the catalytic Thioimidate intermediate. IMP-binding positions include 382–384, 405–406, and 430–434; these read DGG, GG, and YRGMG. The active-site Proton acceptor is the R460. Q472 lines the IMP pocket. Positions 531 and 532 each coordinate K(+).

The protein belongs to the IMPDH/GMPR family. In terms of assembly, homotetramer. K(+) is required as a cofactor.

Its subcellular location is the cytoplasm. It catalyses the reaction IMP + NAD(+) + H2O = XMP + NADH + H(+). The protein operates within purine metabolism; XMP biosynthesis via de novo pathway; XMP from IMP: step 1/1. With respect to regulation, mycophenolic acid (MPA) is a non-competitive inhibitor that prevents formation of the closed enzyme conformation by binding to the same site as the amobile flap. In contrast, mizoribine monophosphate (MZP) is a competitive inhibitor that induces the closed conformation. MPA is a potent inhibitor of mammalian IMPDHs but a poor inhibitor of the bacterial enzymes. MZP is a more potent inhibitor of bacterial IMPDH. Catalyzes the conversion of inosine 5'-phosphate (IMP) to xanthosine 5'-phosphate (XMP), the first committed and rate-limiting step in the de novo synthesis of guanine nucleotides, and therefore plays an important role in the regulation of cell growth. The polypeptide is Inosine-5'-monophosphate dehydrogenase (Aspergillus fumigatus (strain ATCC MYA-4609 / CBS 101355 / FGSC A1100 / Af293) (Neosartorya fumigata)).